Reading from the N-terminus, the 267-residue chain is DNA repair protein RecO (267 aa).

Belongs to the RecO family.

Its function is as follows. Involved in DNA repair and RecF pathway recombination. The protein is DNA repair protein RecO of Mesoplasma florum (strain ATCC 33453 / NBRC 100688 / NCTC 11704 / L1) (Acholeplasma florum).